Reading from the N-terminus, the 684-residue chain is Acetyl-coenzyme A synthetase 2 (684 aa).

CoA-binding positions include 207–210 (RGGK) and T326. ATP is bound by residues 402-404 (GEP), 426-431 (DTMWQT), D517, and R532. CoA is bound at residue S540. Residue R543 coordinates ATP. Position 613 (R613) interacts with CoA.

The protein belongs to the ATP-dependent AMP-binding enzyme family.

The enzyme catalyses acetate + ATP + CoA = acetyl-CoA + AMP + diphosphate. This chain is Acetyl-coenzyme A synthetase 2 (ACS2), found in Kluyveromyces lactis (strain ATCC 8585 / CBS 2359 / DSM 70799 / NBRC 1267 / NRRL Y-1140 / WM37) (Yeast).